The following is a 107-amino-acid chain: EPIDERMAL PATTERNING FACTOR-like protein 3 (107 aa).

Residues 1–24 form the signal peptide; the sequence is MEYMFLLMSKFFFVFPIIIYIGPA. Cystine bridges form between cysteine 64-cysteine 102, cysteine 68-cysteine 74, and cysteine 71-cysteine 104.

This sequence belongs to the plant cysteine rich small secretory peptide family. Epidermal patterning factor subfamily.

The protein resides in the secreted. Its function is as follows. Controls stomatal patterning. The sequence is that of EPIDERMAL PATTERNING FACTOR-like protein 3 from Arabidopsis thaliana (Mouse-ear cress).